The following is a 291-amino-acid chain: Kidney mitochondrial carrier protein 1 (291 aa).

Position 2 is an N-acetylserine (Ser2). Solcar repeat units lie at residues 7–96 (KPFV…LKRL), 104–189 (ETLP…TKKH), and 198–289 (DTVY…LKKL). 6 helical membrane-spanning segments follow: residues 9–26 (FVYGGLASITAECGTFPI), 71–89 (GIAPAMLRQASYGTIKIGT), 105–124 (TLPINVICGILSGVISSTIA), 164–183 (GVSLTAQRAAIVVGVELPVY), 204–224 (FLSSFTCGLAGALASNPVDVV), and 264–283 (GFWPNWLRLGPWNIIFFVTY).

The protein belongs to the mitochondrial carrier (TC 2.A.29) family. As to quaternary structure, interacts with VDAC1.

The protein localises to the mitochondrion inner membrane. The enzyme catalyses sulfite(in) + sulfate(out) = sulfite(out) + sulfate(in). The catalysed reaction is thiosulfate(in) + sulfate(out) = thiosulfate(out) + sulfate(in). It catalyses the reaction sulfate(out) + phosphate(in) = sulfate(in) + phosphate(out). It carries out the reaction oxalate(in) + sulfate(out) = oxalate(out) + sulfate(in). The enzyme catalyses malonate(in) + sulfate(out) = malonate(out) + sulfate(in). The catalysed reaction is maleate(in) + sulfate(out) = maleate(out) + sulfate(in). It catalyses the reaction (S)-malate(in) + sulfate(out) = (S)-malate(out) + sulfate(in). It carries out the reaction (3S)-citramalate(in) + sulfate(out) = (3S)-citramalate(out) + sulfate(in). The enzyme catalyses (3R)-citramalate(in) + sulfate(out) = (3R)-citramalate(out) + sulfate(in). The catalysed reaction is sulfate(out) + succinate(in) = sulfate(in) + succinate(out). It catalyses the reaction (S,S)-tartrate(in) + sulfate(out) = (S,S)-tartrate(out) + sulfate(in). It carries out the reaction (2R,3R)-tartrate(in) + sulfate(out) = (2R,3R)-tartrate(out) + sulfate(in). The enzyme catalyses D-aspartate(in) + sulfate(out) = D-aspartate(out) + sulfate(in). The catalysed reaction is L-aspartate(in) + sulfate(out) = L-aspartate(out) + sulfate(in). It catalyses the reaction sulfate(in) = sulfate(out). It carries out the reaction phosphate(in) = phosphate(out). The enzyme catalyses (S)-malate(out) = (S)-malate(in). Its activity is regulated as follows. Increased activity at pH 6.0. sulfate/sulfate exchange activity is inhibited strongly by pyridoxal 5'-phosphate, bathophenanthroline and the organic mercurials mersalyl, p-chloromercuribenzoate and HgCl2. Antiporter that transports inorganic anions (sulfate, sulfite, thiosulfate and phosphate) and, to a lesser extent, a variety of dicarboxylates (e.g. malonate, malate and citramalate) and, even more so, aspartate. The sulfate/sulfate exchange is much higher than the phosphate/phosphate and malate/malate exchanges. The transport affinities is higher for sulfate and thiosulfate than for any other substrate. May catalyze the export of sulfite and thiosulfate (the hydrogen sulfide degradation products) from the mitochondria, thereby modulating the level of the hydrogen sulfide. Also may mediate a very low unidirectional transport of sulfate, phosphate and (S)-malate. The protein is Kidney mitochondrial carrier protein 1 of Homo sapiens (Human).